The primary structure comprises 78 residues: MKQIFIGIIRFYQKFISPMTPPTCRFYPTCSHYGLEAFQKHGALKGFWLTCKRILKCHPFHPGGFDPVPDKKDDKVHS.

The protein belongs to the UPF0161 family.

It is found in the cell membrane. In terms of biological role, could be involved in insertion of integral membrane proteins into the membrane. This chain is Putative membrane protein insertion efficiency factor, found in Bacillus thuringiensis subsp. konkukian (strain 97-27).